The sequence spans 281 residues: 2-dehydro-3-deoxyphosphooctonate aldolase (281 aa).

It belongs to the KdsA family.

The protein resides in the cytoplasm. The catalysed reaction is D-arabinose 5-phosphate + phosphoenolpyruvate + H2O = 3-deoxy-alpha-D-manno-2-octulosonate-8-phosphate + phosphate. Its pathway is carbohydrate biosynthesis; 3-deoxy-D-manno-octulosonate biosynthesis; 3-deoxy-D-manno-octulosonate from D-ribulose 5-phosphate: step 2/3. It functions in the pathway bacterial outer membrane biogenesis; lipopolysaccharide biosynthesis. The polypeptide is 2-dehydro-3-deoxyphosphooctonate aldolase (Azotobacter vinelandii (strain DJ / ATCC BAA-1303)).